We begin with the raw amino-acid sequence, 151 residues long: Lipoprotein signal peptidase (151 aa).

2 consecutive transmembrane segments (helical) span residues 61-81 (GSQW…IWIG) and 88-107 (SRWQ…GNGI). Catalysis depends on residues Asp-117 and Asp-133. Residues 128-148 (VFNLADVAINLAVLCLLIEAI) form a helical membrane-spanning segment.

Belongs to the peptidase A8 family.

The protein localises to the cell inner membrane. It carries out the reaction Release of signal peptides from bacterial membrane prolipoproteins. Hydrolyzes -Xaa-Yaa-Zaa-|-(S,diacylglyceryl)Cys-, in which Xaa is hydrophobic (preferably Leu), and Yaa (Ala or Ser) and Zaa (Gly or Ala) have small, neutral side chains.. It functions in the pathway protein modification; lipoprotein biosynthesis (signal peptide cleavage). Functionally, this protein specifically catalyzes the removal of signal peptides from prolipoproteins. The chain is Lipoprotein signal peptidase from Synechococcus sp. (strain RCC307).